Here is a 90-residue protein sequence, read N- to C-terminus: DNA-binding protein HU (90 aa).

This sequence belongs to the bacterial histone-like protein family. As to quaternary structure, homodimer.

Functionally, histone-like DNA-binding protein which is capable of wrapping DNA to stabilize it, and thus to prevent its denaturation under extreme environmental conditions. The protein is DNA-binding protein HU (hup) of Staphylococcus aureus (strain COL).